The sequence spans 192 residues: Ion-translocating oxidoreductase complex subunit B (192 aa).

The hydrophobic stretch occupies residues 1-26 (MNAIWIAVAAVSLLALAFGAILGYAS). The 4Fe-4S domain maps to 32–91 (EDDPVVEKIDEILPQSQCGQCGYPGCRPYAEAISCNGEKINRCAPGGEAVMLKIAELLNV). Cysteine 49, cysteine 52, cysteine 57, cysteine 74, cysteine 117, cysteine 120, cysteine 123, cysteine 127, cysteine 147, cysteine 150, cysteine 153, and cysteine 157 together coordinate [4Fe-4S] cluster. 4Fe-4S ferredoxin-type domains lie at 108–137 (MVAV…GATR) and 138–167 (AMHT…LQPV).

This sequence belongs to the 4Fe4S bacterial-type ferredoxin family. RnfB subfamily. The complex is composed of six subunits: RsxA, RsxB, RsxC, RsxD, RsxE and RsxG. Requires [4Fe-4S] cluster as cofactor.

It is found in the cell inner membrane. Functionally, part of a membrane-bound complex that couples electron transfer with translocation of ions across the membrane. Required to maintain the reduced state of SoxR. This is Ion-translocating oxidoreductase complex subunit B from Escherichia coli O81 (strain ED1a).